The following is a 430-amino-acid chain: Adenylosuccinate synthetase (430 aa).

GTP-binding positions include 13–19 (GDEGKGK) and 41–43 (GHT). Residue D14 is the Proton acceptor of the active site. Mg(2+) is bound by residues D14 and G41. IMP is bound by residues 14–17 (DEGK), 39–42 (NAGH), T130, R144, Q225, T240, and R304. Residue H42 is the Proton donor of the active site. 300 to 306 (ASTGRPR) provides a ligand contact to substrate. GTP-binding positions include R306, 332-334 (KLD), and 414-416 (STG).

It belongs to the adenylosuccinate synthetase family. As to quaternary structure, homodimer. It depends on Mg(2+) as a cofactor.

It is found in the cytoplasm. The enzyme catalyses IMP + L-aspartate + GTP = N(6)-(1,2-dicarboxyethyl)-AMP + GDP + phosphate + 2 H(+). Its pathway is purine metabolism; AMP biosynthesis via de novo pathway; AMP from IMP: step 1/2. Plays an important role in the de novo pathway of purine nucleotide biosynthesis. Catalyzes the first committed step in the biosynthesis of AMP from IMP. The sequence is that of Adenylosuccinate synthetase from Xylella fastidiosa (strain M12).